A 160-amino-acid chain; its full sequence is MRCPNCNSLDTQVKDSRPTEDSSVIRRRRVCIACNFRFTTFERVQLRELTVIKRNGRRVPFDRDKLVRSLQISLRKRPVEPERVEQMVSAIVRELESGGEADISSETIGEIVMDHLRKLDDVAYVRFASVYRNFREAKDFEAVLGELSGEEEARPALVRK.

Residues 1–11 are compositionally biased toward polar residues; sequence MRCPNCNSLDT. Residues 1–20 are disordered; the sequence is MRCPNCNSLDTQVKDSRPTE. A zinc finger lies at 3-34; sequence CPNCNSLDTQVKDSRPTEDSSVIRRRRVCIAC. An ATP-cone domain is found at 49–139; that stretch reads LTVIKRNGRR…VYRNFREAKD (91 aa).

The protein belongs to the NrdR family. The cofactor is Zn(2+).

In terms of biological role, negatively regulates transcription of bacterial ribonucleotide reductase nrd genes and operons by binding to NrdR-boxes. The protein is Transcriptional repressor NrdR of Rhodopseudomonas palustris (strain HaA2).